Here is a 379-residue protein sequence, read N- to C-terminus: Queuine tRNA-ribosyltransferase (379 aa).

Catalysis depends on aspartate 94, which acts as the Proton acceptor. Substrate is bound by residues 94–98 (DSGGF), aspartate 148, glutamine 191, and glycine 218. Residues 249 to 255 (GVGSPDS) form an RNA binding region. The active-site Nucleophile is aspartate 268. The interval 273 to 277 (TRIAR) is RNA binding; important for wobble base 34 recognition. 4 residues coordinate Zn(2+): cysteine 306, cysteine 308, cysteine 311, and histidine 337.

Belongs to the queuine tRNA-ribosyltransferase family. Homodimer. Within each dimer, one monomer is responsible for RNA recognition and catalysis, while the other monomer binds to the replacement base PreQ1. Zn(2+) is required as a cofactor.

The enzyme catalyses 7-aminomethyl-7-carbaguanine + guanosine(34) in tRNA = 7-aminomethyl-7-carbaguanosine(34) in tRNA + guanine. Its pathway is tRNA modification; tRNA-queuosine biosynthesis. In terms of biological role, catalyzes the base-exchange of a guanine (G) residue with the queuine precursor 7-aminomethyl-7-deazaguanine (PreQ1) at position 34 (anticodon wobble position) in tRNAs with GU(N) anticodons (tRNA-Asp, -Asn, -His and -Tyr). Catalysis occurs through a double-displacement mechanism. The nucleophile active site attacks the C1' of nucleotide 34 to detach the guanine base from the RNA, forming a covalent enzyme-RNA intermediate. The proton acceptor active site deprotonates the incoming PreQ1, allowing a nucleophilic attack on the C1' of the ribose to form the product. After dissociation, two additional enzymatic reactions on the tRNA convert PreQ1 to queuine (Q), resulting in the hypermodified nucleoside queuosine (7-(((4,5-cis-dihydroxy-2-cyclopenten-1-yl)amino)methyl)-7-deazaguanosine). This is Queuine tRNA-ribosyltransferase from Listeria welshimeri serovar 6b (strain ATCC 35897 / DSM 20650 / CCUG 15529 / CIP 8149 / NCTC 11857 / SLCC 5334 / V8).